Consider the following 367-residue polypeptide: Histidinol-phosphate aminotransferase (367 aa).

Position 230 is an N6-(pyridoxal phosphate)lysine (lysine 230).

It belongs to the class-II pyridoxal-phosphate-dependent aminotransferase family. Histidinol-phosphate aminotransferase subfamily. In terms of assembly, homodimer. Pyridoxal 5'-phosphate serves as cofactor.

It catalyses the reaction L-histidinol phosphate + 2-oxoglutarate = 3-(imidazol-4-yl)-2-oxopropyl phosphate + L-glutamate. Its pathway is amino-acid biosynthesis; L-histidine biosynthesis; L-histidine from 5-phospho-alpha-D-ribose 1-diphosphate: step 7/9. The chain is Histidinol-phosphate aminotransferase from Thermobifida fusca (strain YX).